The sequence spans 604 residues: Rhotekin-2 (604 aa).

Positions 1–74 constitute an REM-1 domain; sequence MEGQLLRGLA…LQKSKEEIAN (74 aa). A coiled-coil region spans residues 53-79; it reads VCSARIQAYTAELQKSKEEIANQTGAR. A PH domain is found at 281–387; it reads ADAFAGFLNE…WMGAFRQHFF (107 aa). The segment at 481 to 590 is disordered; that stretch reads LSPIGEPAPD…PVPVPRQKSI (110 aa). Residues 514–527 show a composition bias toward polar residues; that stretch reads GRANQSKDSATQAG. Low complexity predominate over residues 529–543; it reads SGASSSPSDPRLSPP.

Its function is as follows. May play an important role in lymphopoiesis. The polypeptide is Rhotekin-2 (Rtkn2) (Mus musculus (Mouse)).